Reading from the N-terminus, the 577-residue chain is Glycine--tRNA ligase (577 aa).

R96 and E161 together coordinate substrate. Residues 193–195 (RNE), 203–208 (IRLREF), 319–320 (EI), and 434–437 (GIDR) contribute to the ATP site. 208 to 212 (FSQAE) serves as a coordination point for substrate. Residue 430–434 (EPSFG) coordinates substrate.

The protein belongs to the class-II aminoacyl-tRNA synthetase family.

The protein localises to the cytoplasm. It carries out the reaction tRNA(Gly) + glycine + ATP = glycyl-tRNA(Gly) + AMP + diphosphate. Catalyzes the attachment of glycine to tRNA(Gly). The protein is Glycine--tRNA ligase of Methanothrix thermoacetophila (strain DSM 6194 / JCM 14653 / NBRC 101360 / PT) (Methanosaeta thermophila).